Consider the following 389-residue polypeptide: Cytochrome B translational activator CBS2 (389 aa).

It is found in the mitochondrion. In terms of biological role, translational activator of cytochrome b. The cytochrome b (coB) leader RNA may represent the target sequence for CBS1 and/ or CBS2. This is Cytochrome B translational activator CBS2 (CBS2) from Saccharomyces cerevisiae (strain ATCC 204508 / S288c) (Baker's yeast).